Reading from the N-terminus, the 248-residue chain is Lysine-rich arabinogalactan protein 19 (248 aa).

Positions 1–24 are cleaved as a signal peptide; sequence MESNSIIWSLLLASALISSFSVNA. Low complexity predominate over residues 25 to 37; sequence QGPAASPVTSTTT. The segment at 25-221 is disordered; sequence QGPAASPVTS…APSPNTNGGN (197 aa). 3 stretches are compositionally biased toward pro residues: residues 38-57, 67-86, and 94-171; these read APPP…PTTT, PASP…PAPK, and ATPP…PAPA. Residues 173–187 show a composition bias toward basic residues; it reads TKHKRKHKHKRHHHA. The span at 189-203 shows a compositional bias: pro residues; it reads APAPIPPSPPSPPVL. S196 is lipidated: GPI-anchor amidated serine. A propeptide spans 197-248 (removed in mature form); sequence PPSPPVLTDPQDTAPAPSPNTNGGNALNQLKGRAVMWLNTGLVILFLLAMTA.

The protein belongs to the lysine-rich AGP family. Post-translationally, O-glycosylated on the hydroxyproline residues. In terms of tissue distribution, strongly expressed in stems, moderately expressed in flowers and roots and weakly expressed in young leaves.

It is found in the cell membrane. In terms of biological role, proteoglycan that seems to be implicated in diverse developmental roles such as differentiation, cell-cell recognition, embryogenesis and programmed cell death. In Arabidopsis thaliana (Mouse-ear cress), this protein is Lysine-rich arabinogalactan protein 19 (AGP19).